The following is a 676-amino-acid chain: UvrABC system protein C (676 aa).

One can recognise a GIY-YIG domain in the interval 16–95 (VEPGVYRFRD…IKEFDPRFNI (80 aa)). The 36-residue stretch at 208 to 243 (DRLVRDLERKMTAAAEDLDFERAARLRDDIGALRRA) folds into the UVR domain.

The protein belongs to the UvrC family. As to quaternary structure, interacts with UvrB in an incision complex.

The protein localises to the cytoplasm. Its function is as follows. The UvrABC repair system catalyzes the recognition and processing of DNA lesions. UvrC both incises the 5' and 3' sides of the lesion. The N-terminal half is responsible for the 3' incision and the C-terminal half is responsible for the 5' incision. The sequence is that of UvrABC system protein C from Mycobacterium sp. (strain JLS).